The following is a 515-amino-acid chain: Leucine-rich repeat transmembrane neuronal protein 2 (515 aa).

The first 33 residues, 1–33 (MGLHFKWPLGAPMLAAIYAMSVVLKMLPALGMA), serve as a signal peptide directing secretion. The region spanning 34-61 (CPPKCRCEKLLFYCDSQGFHSVPNATDK) is the LRRNT domain. At 34 to 421 (CPPKCRCEKL…EPDNAIFTQR (388 aa)) the chain is on the extracellular side. Asn57 is a glycosylation site (N-linked (GlcNAc...) asparagine). 10 LRR repeats span residues 63–83 (SLGL…QFAS), 86–107 (QLTW…AFQG), 110–131 (KLKE…TFTQ), 134–155 (NLQN…LFYG), 158–179 (KLQT…LFWD), 182–203 (SLEF…GFAG), 206–227 (KLRE…HFLR), 230–251 (SLHT…MDWT), 254–275 (TLEK…VFET), and 278–299 (NLKI…ILNS). Residue Asn126 is glycosylated (N-linked (GlcNAc...) asparagine). Asn243 is a glycosylation site (N-linked (GlcNAc...) asparagine). Residues 311 to 362 (NLWECSPRVCALASWLGSFQGRWEHSILCHSPDHTQGEDILDAVHGFQLCWN) enclose the LRRCT domain. Asn362 carries an N-linked (GlcNAc...) asparagine glycan. Residues 422–442 (VITGTMALLFSFFFIIFIVFI) traverse the membrane as a helical segment. Over 443–515 (SRKCCPPTLR…QQLPYKECEV (73 aa)) the chain is Cytoplasmic. An Involved in DLG4-binding motif is present at residues 512–515 (ECEV).

It belongs to the LRRTM family. In terms of assembly, interacts with DLG4. Interacts with neurexin NRXN1; interaction is mediated by heparan sulfate glycan modification on neurexin. As to expression, expressed in neuronal tissues.

The protein resides in the cell membrane. It is found in the postsynaptic cell membrane. In terms of biological role, involved in the development and maintenance of excitatory synapses in the vertebrate nervous system. Regulates surface expression of AMPA receptors and instructs the development of functional glutamate release sites. Acts as a ligand for the presynaptic receptors NRXN1-A and NRXN1-B. This is Leucine-rich repeat transmembrane neuronal protein 2 (Lrrtm2) from Mus musculus (Mouse).